Consider the following 77-residue polypeptide: NAD(P)H-quinone oxidoreductase subunit L (77 aa).

Transmembrane regions (helical) follow at residues 12–32 and 47–67; these read LVAY…ILFY and LIVY…SPFL.

It belongs to the complex I NdhL subunit family. NDH-1 can be composed of about 15 different subunits; different subcomplexes with different compositions have been identified which probably have different functions.

The protein localises to the cellular thylakoid membrane. It carries out the reaction a plastoquinone + NADH + (n+1) H(+)(in) = a plastoquinol + NAD(+) + n H(+)(out). The catalysed reaction is a plastoquinone + NADPH + (n+1) H(+)(in) = a plastoquinol + NADP(+) + n H(+)(out). In terms of biological role, NDH-1 shuttles electrons from an unknown electron donor, via FMN and iron-sulfur (Fe-S) centers, to quinones in the respiratory and/or the photosynthetic chain. The immediate electron acceptor for the enzyme in this species is believed to be plastoquinone. Couples the redox reaction to proton translocation, and thus conserves the redox energy in a proton gradient. Cyanobacterial NDH-1 also plays a role in inorganic carbon-concentration. In Prochlorococcus marinus subsp. pastoris (strain CCMP1986 / NIES-2087 / MED4), this protein is NAD(P)H-quinone oxidoreductase subunit L.